Reading from the N-terminus, the 1044-residue chain is Pre-mRNA-splicing factor ATP-dependent RNA helicase DEAH1 (1044 aa).

Residues 106 to 206 form a disordered region; that stretch reads EVVVEKKSSV…TLSKKEKEEA (101 aa). The span at 108–121 shows a compositional bias: basic and acidic residues; the sequence is VVEKKSSVSESRKS. Residues 122–132 show a composition bias toward basic residues; sequence DKGKKRFRKKS. Residues serine 135 and serine 138 each carry the phosphoserine modification. Over residues 157 to 166 the composition is skewed to acidic residues; the sequence is EEDDGSESEE. Positions 167–206 are enriched in basic and acidic residues; that stretch reads ERVRDQKEREELEQHLKDRDTARTRKLTEQTLSKKEKEEA. Residues 414–577 form the Helicase ATP-binding domain; the sequence is LKAVEEHQVL…FDTAPIFSFP (164 aa). 427–434 contributes to the ATP binding site; the sequence is GDTGSGKT. The short motif at 524–527 is the DEAH box element; it reads DEAH. Residues 600–775 enclose the Helicase C-terminal domain; that stretch reads IVTILTIHVR…SVVLALKSLG (176 aa).

It belongs to the DEAD box helicase family. DEAH subfamily. PRP2 sub-subfamily. Widely expressed.

The catalysed reaction is ATP + H2O = ADP + phosphate + H(+). Involved in pre-mRNA splicing. This Arabidopsis thaliana (Mouse-ear cress) protein is Pre-mRNA-splicing factor ATP-dependent RNA helicase DEAH1.